Here is a 180-residue protein sequence, read N- to C-terminus: 2-oxoglutarate dehydrogenase, mitochondrial (180 aa).

Residue lysine 14 is modified to N6-succinyllysine. The residue at position 40 (serine 40) is a Phosphoserine. Arginine 64 contributes to the thiamine diphosphate binding site.

This sequence belongs to the alpha-ketoglutarate dehydrogenase family. Homodimer. The 2-oxoglutarate dehydrogenase complex is composed of OGDH (2-oxoglutarate dehydrogenase; E1), DLST (dihydrolipoamide succinyltransferase; E2) and DLD (dihydrolipoamide dehydrogenase; E3). It contains multiple copies of the three enzymatic components (E1, E2 and E3). In the nucleus, the 2-oxoglutarate dehydrogenase complex associates with KAT2A. Interacts with ABHD11; this interaction maintains the functional lipoylation of the 2-oxoglutarate dehydrogenase complex. Thiamine diphosphate serves as cofactor. Requires Mg(2+) as cofactor.

The protein localises to the mitochondrion matrix. It is found in the nucleus. It carries out the reaction N(6)-[(R)-lipoyl]-L-lysyl-[protein] + 2-oxoglutarate + H(+) = N(6)-[(R)-S(8)-succinyldihydrolipoyl]-L-lysyl-[protein] + CO2. Its activity is regulated as follows. Calcium ions and ADP stimulate, whereas ATP and NADH reduce catalytic activity. Its function is as follows. 2-oxoglutarate dehydrogenase (E1) component of the 2-oxoglutarate dehydrogenase complex (OGDHC), which mediates the decarboxylation of alpha-ketoglutarate. The 2-oxoglutarate dehydrogenase complex catalyzes the overall conversion of 2-oxoglutarate to succinyl-CoA and CO(2). The 2-oxoglutarate dehydrogenase complex is mainly active in the mitochondrion. A fraction of the 2-oxoglutarate dehydrogenase complex also localizes in the nucleus and is required for lysine succinylation of histones: associates with KAT2A on chromatin and provides succinyl-CoA to histone succinyltransferase KAT2A. This is 2-oxoglutarate dehydrogenase, mitochondrial from Mesocricetus auratus (Golden hamster).